We begin with the raw amino-acid sequence, 460 residues long: MLTIYNTLSKTKEVFKPLDGNKVRMYVCGMTVYDYCHLGHGRSMVAFDLVTRWLRKSGYELTYVRNITDIDDKIINRANENGETFDALTARMIDAMHEDERRLNILPPDQEPRATDHIAGMHAMIQTLIDKGYAYAPGNGDVYYRVGKFVGYGKLSRKKIEDLRIGARIEVDEAKQDPLDFVLWKGVKPGEPSWESPWGPGRPGWHIECSVMSTRCLGESFDIHGGGSDLEFPHHENEIAQSEAATGKQYANAWMHCGMIRINGEKMSKSLNNFFTIRDVLEKYHPEVVRYLLVASHYRSAINYSEDSLRDAKGALERFYHALRGLPRVAAKGGEAFVERFSVAMNDDFGTPEACAVLFDLVREINRLRDSDPEAAAGLAGRLRELGDVLGVLQLEADDFLRAGAEGKVDAAEVEGLIQARLQARADKNWAESDRIRDQLTAMGVVLEDSKGTTTWRLAD.

Cys-28 contacts Zn(2+). A 'HIGH' region motif is present at residues Met-30–His-40. The Zn(2+) site is built by Cys-209, His-234, and Glu-238. The 'KMSKS' region signature appears at Lys-266 to Ser-270. Residue Lys-269 participates in ATP binding.

Belongs to the class-I aminoacyl-tRNA synthetase family. Monomer. Zn(2+) is required as a cofactor.

The protein resides in the cytoplasm. The enzyme catalyses tRNA(Cys) + L-cysteine + ATP = L-cysteinyl-tRNA(Cys) + AMP + diphosphate. In Pseudomonas putida (strain ATCC 700007 / DSM 6899 / JCM 31910 / BCRC 17059 / LMG 24140 / F1), this protein is Cysteine--tRNA ligase.